The following is a 204-amino-acid chain: Methylthioribulose-1-phosphate dehydratase (204 aa).

Zn(2+)-binding residues include His-96 and His-98.

It belongs to the aldolase class II family. MtnB subfamily. Zn(2+) serves as cofactor.

The enzyme catalyses 5-(methylsulfanyl)-D-ribulose 1-phosphate = 5-methylsulfanyl-2,3-dioxopentyl phosphate + H2O. It participates in amino-acid biosynthesis; L-methionine biosynthesis via salvage pathway; L-methionine from S-methyl-5-thio-alpha-D-ribose 1-phosphate: step 2/6. Functionally, catalyzes the dehydration of methylthioribulose-1-phosphate (MTRu-1-P) into 2,3-diketo-5-methylthiopentyl-1-phosphate (DK-MTP-1-P). The chain is Methylthioribulose-1-phosphate dehydratase from Methylococcus capsulatus (strain ATCC 33009 / NCIMB 11132 / Bath).